The chain runs to 210 residues: Small ribosomal subunit protein uS4 (210 aa).

An S4 RNA-binding domain is found at 99 to 161 (RRLDSVIYRM…SKNNATILSA (63 aa)).

This sequence belongs to the universal ribosomal protein uS4 family. Part of the 30S ribosomal subunit. Contacts protein S5. The interaction surface between S4 and S5 is involved in control of translational fidelity.

Functionally, one of the primary rRNA binding proteins, it binds directly to 16S rRNA where it nucleates assembly of the body of the 30S subunit. Its function is as follows. With S5 and S12 plays an important role in translational accuracy. The chain is Small ribosomal subunit protein uS4 from Solibacter usitatus (strain Ellin6076).